A 222-amino-acid chain; its full sequence is 7-cyano-7-deazaguanine synthase (222 aa).

ATP is bound at residue 7-17; it reads LSGGMDSAVAT. Residues Cys188, Cys196, Cys199, and Cys202 each coordinate Zn(2+).

It belongs to the QueC family. It depends on Zn(2+) as a cofactor.

It carries out the reaction 7-carboxy-7-deazaguanine + NH4(+) + ATP = 7-cyano-7-deazaguanine + ADP + phosphate + H2O + H(+). It functions in the pathway purine metabolism; 7-cyano-7-deazaguanine biosynthesis. Its function is as follows. Catalyzes the ATP-dependent conversion of 7-carboxy-7-deazaguanine (CDG) to 7-cyano-7-deazaguanine (preQ(0)). The polypeptide is 7-cyano-7-deazaguanine synthase (Methanothermobacter thermautotrophicus (strain ATCC 29096 / DSM 1053 / JCM 10044 / NBRC 100330 / Delta H) (Methanobacterium thermoautotrophicum)).